Consider the following 170-residue polypeptide: Cathelicidin antimicrobial peptide (170 aa).

An N-terminal signal peptide occupies residues Met1–Ala30. Residues Gln31–Arg131 constitute a propeptide, cathelin-like domain (CLD). Cystine bridges form between Cys86/Cys97 and Cys108/Cys125. An active core region spans residues Phe150–Arg162.

Belongs to the cathelicidin family. Monomer, homodimer or homotrimer (in vitro). Oligomerizes as tetra- or hexamer in solution (in vitro). In terms of processing, the N-terminus is blocked. Proteolytically cleaved by proteinase PRTN3 into antibacterial peptide LL-37. Proteolytically cleaved by cathepsin CTSG and neutrophil elastase ELANE. Post-translationally, resistant to proteolytic degradation in solution, and when bound to both zwitterionic (mimicking mammalian membranes) and negatively charged membranes (mimicking bacterial membranes). In terms of processing, after secretion onto the skin surface, the CAMP gene product is processed by a serine protease-dependent mechanism into multiple novel antimicrobial peptides distinct from and shorter than cathelicidin LL-37, such as peptides KR-20 (residues 151-170), LL-23 (residues 134-156), LL-29 (residues 134-162), KS-30 (residues 141-170), RK-31 (residues 140-170) and FF-33 (residues 138-170). The peptides act synergistically, killing bacteria at lower concentrations when present together, and maintain activity at increased salt condition. Expressed in neutrophilic granulocytes (at protein level). Expressed in bone marrow. As to expression, expressed in granulocytes (at protein level). Expressed by the eccrine apparatus and secreted into sweat on skin (at protein level). In terms of tissue distribution, expressed in bone marrow and testis.

Its subcellular location is the secreted. It is found in the vesicle. Its function is as follows. Antimicrobial protein that is an integral component of the innate immune system. Binds to bacterial lipopolysaccharides (LPS). Acts via neutrophil N-formyl peptide receptors to enhance the release of CXCL2. Postsecretory processing generates multiple cathelicidin antimicrobial peptides with various lengths which act as a topical antimicrobial defense in sweat on skin. The unprocessed precursor form, cathelicidin antimicrobial peptide, inhibits the growth of Gram-negative E.coli and E.aerogenes with efficiencies comparable to that of the mature peptide LL-37 (in vitro). Functionally, antimicrobial peptide that is an integral component of the innate immune system. Binds to bacterial lipopolysaccharides (LPS). Causes membrane permeabilization by forming transmembrane pores (in vitro). Causes lysis of E.coli. Exhibits antimicrobial activity against Gram-negative bacteria such as P.aeruginosa, S.typhimurium, E.aerogenes, E.coli and P.syringae, Gram-positive bacteria such as L.monocytogenes, S.epidermidis, S.pyogenes and S.aureus, as well as vancomycin-resistant enterococci (in vitro). Exhibits antimicrobial activity against methicillin-resistant S.aureus, P.mirabilis, and C.albicans in low-salt media, but not in media containing 100 mM NaCl (in vitro). Forms chiral supramolecular assemblies with quinolone signal (PQS) molecules of P.aeruginosa, which may lead to interference of bacterial quorum signaling and perturbance of bacterial biofilm formation. May form supramolecular fiber-like assemblies on bacterial membranes. Induces cytokine and chemokine production as well as TNF/TNFA and CSF2/GMCSF production in normal human keratinocytes. Exhibits hemolytic activity against red blood cells. Exhibits antimicrobial activity against E.coli and B.megaterium (in vitro). In terms of biological role, acts synergistically with peptides KS-30 and KR-31, killing bacteria such as S.aureus, E.coli and C.albicans at lower concentrations when present together, and maintains activity at increased salt condition. Does not have the ability to stimulate CXCL8/IL8 release from keratinocytes. Its function is as follows. Poorly active (MIC &gt; 150 uM) against E.coli strain K12. Is able to induce the pro-inflammatory cytokine TNF/TNFA or the chemokine CCL2/MCP1. Functionally, moderately antibacterial. Moderately antibacterial. Acts synergistically with peptides KR-20 and KR-31, killing bacteria such as S.aureus, E.coli and C.albicans at lower concentrations when present together, and maintain activity at increased salt condition. Does not have the ability to stimulate CXCL8/IL8 release from keratinocytes. In terms of biological role, acts synergistically with peptides KS-30 and KR-31, killing bacteria such as S.aureus, E.coli and C.albicans at lower concentrations when present together, and maintain activity at increased salt condition. Does not have the ability to stimulate CXCL8/IL8 release from keratinocytes. Its function is as follows. Inhibits the growth of E.coli and B.megaterium and exhibits hemolytic activity against human red blood cells. The sequence is that of Cathelicidin antimicrobial peptide from Homo sapiens (Human).